The chain runs to 176 residues: Sec-independent protein translocase protein TatB (176 aa).

A helical membrane pass occupies residues 1–21 (MLDLGLSKMALIGVVALVVLG). The interval 155–176 (QSGAARVARHQPASLRRPTRFL) is disordered.

The protein belongs to the TatB family. As to quaternary structure, the Tat system comprises two distinct complexes: a TatABC complex, containing multiple copies of TatA, TatB and TatC subunits, and a separate TatA complex, containing only TatA subunits. Substrates initially bind to the TatABC complex, which probably triggers association of the separate TatA complex to form the active translocon.

The protein resides in the cell inner membrane. Functionally, part of the twin-arginine translocation (Tat) system that transports large folded proteins containing a characteristic twin-arginine motif in their signal peptide across membranes. Together with TatC, TatB is part of a receptor directly interacting with Tat signal peptides. TatB may form an oligomeric binding site that transiently accommodates folded Tat precursor proteins before their translocation. The polypeptide is Sec-independent protein translocase protein TatB (Burkholderia ambifaria (strain ATCC BAA-244 / DSM 16087 / CCUG 44356 / LMG 19182 / AMMD) (Burkholderia cepacia (strain AMMD))).